The primary structure comprises 331 residues: Aldo-keto reductase family 7 member A3 (331 aa).

Position 6 is a phosphoserine (serine 6). Positions 17, 44, and 49 each coordinate NADPH. Tyrosine 49 (proton donor) is an active-site residue. Phosphoserine is present on serine 85. The NADPH site is built by histidine 113, serine 143, asparagine 144, asparagine 198, leucine 200, glycine 202, lysine 208, tyrosine 209, and arginine 222. Threonine 227 is modified (phosphothreonine). Serine 290, glutamine 294, and asparagine 298 together coordinate NADPH.

The protein belongs to the aldo/keto reductase family. Aldo/keto reductase 2 subfamily. As to quaternary structure, homodimer. As to expression, expressed in colon, kidney, liver, pancreas, adenocarcinoma and endometrium.

The protein localises to the cytoplasm. The enzyme catalyses a primary alcohol + NADP(+) = an aldehyde + NADPH + H(+). The catalysed reaction is aflatoxin B1 dialdehyde + NADPH + H(+) = aflatoxin B1 C(6a)-monoaldehyde + NADP(+). It catalyses the reaction aflatoxin B1 dialdehyde + NADPH + H(+) = aflatoxin B1 C(8)-monoaldehyde + NADP(+). It carries out the reaction aflatoxin B1 C(6a)-monoaldehyde + NADPH + 2 H(+) = aflatoxin B1 triol + NADP(+). Inhibited by citrate. Its function is as follows. Catalyzes the NADPH-dependent reduction of various carbonyl-containing compounds, including aldehydes, ketones, and toxic products from cellular metabolism or environmental exposure. Can reduce the dialdehyde form of aflatoxin B1 (AFB1) into alcohol derivatives, via monoaldehydes intermediates. Can reduce the dialdehyde form of aflatoxin B1 (AFB1) into alcohol derivatives, via monoaldehydes intermediates, thus preventing the formation of protein adducts that contribute to AFB1-induced toxicity. In Homo sapiens (Human), this protein is Aldo-keto reductase family 7 member A3.